Here is a 104-residue protein sequence, read N- to C-terminus: Pyrimidine/purine nucleoside phosphorylase (104 aa).

This sequence belongs to the nucleoside phosphorylase PpnP family.

The catalysed reaction is a purine D-ribonucleoside + phosphate = a purine nucleobase + alpha-D-ribose 1-phosphate. It carries out the reaction adenosine + phosphate = alpha-D-ribose 1-phosphate + adenine. The enzyme catalyses cytidine + phosphate = cytosine + alpha-D-ribose 1-phosphate. It catalyses the reaction guanosine + phosphate = alpha-D-ribose 1-phosphate + guanine. The catalysed reaction is inosine + phosphate = alpha-D-ribose 1-phosphate + hypoxanthine. It carries out the reaction thymidine + phosphate = 2-deoxy-alpha-D-ribose 1-phosphate + thymine. The enzyme catalyses uridine + phosphate = alpha-D-ribose 1-phosphate + uracil. It catalyses the reaction xanthosine + phosphate = alpha-D-ribose 1-phosphate + xanthine. In terms of biological role, catalyzes the phosphorolysis of diverse nucleosides, yielding D-ribose 1-phosphate and the respective free bases. Can use uridine, adenosine, guanosine, cytidine, thymidine, inosine and xanthosine as substrates. Also catalyzes the reverse reactions. In Geobacter sulfurreducens (strain ATCC 51573 / DSM 12127 / PCA), this protein is Pyrimidine/purine nucleoside phosphorylase.